The primary structure comprises 554 residues: CTP synthase (554 aa).

Residues 1–279 (MTSSRKVRPT…DTFIIRRLGL (279 aa)) form an amidoligase domain region. Serine 21 contacts CTP. A UTP-binding site is contributed by serine 21. Residues 22-27 (SLGKGL) and aspartate 79 contribute to the ATP site. Mg(2+)-binding residues include aspartate 79 and glutamate 153. CTP contacts are provided by residues 160–162 (DIE), 200–205 (KTKPTQ), and lysine 236. UTP is bound by residues 200–205 (KTKPTQ) and lysine 236. Residues 304-553 (TVGIVGKYID…VKTALELRVH (250 aa)) form the Glutamine amidotransferase type-1 domain. Residue glycine 367 participates in L-glutamine binding. Cysteine 394 serves as the catalytic Nucleophile; for glutamine hydrolysis. Residues 395–398 (LGLQ), glutamate 417, and arginine 478 contribute to the L-glutamine site. Active-site residues include histidine 526 and glutamate 528.

It belongs to the CTP synthase family. As to quaternary structure, homotetramer.

It carries out the reaction UTP + L-glutamine + ATP + H2O = CTP + L-glutamate + ADP + phosphate + 2 H(+). It catalyses the reaction L-glutamine + H2O = L-glutamate + NH4(+). The catalysed reaction is UTP + NH4(+) + ATP = CTP + ADP + phosphate + 2 H(+). It functions in the pathway pyrimidine metabolism; CTP biosynthesis via de novo pathway; CTP from UDP: step 2/2. With respect to regulation, allosterically activated by GTP, when glutamine is the substrate; GTP has no effect on the reaction when ammonia is the substrate. The allosteric effector GTP functions by stabilizing the protein conformation that binds the tetrahedral intermediate(s) formed during glutamine hydrolysis. Inhibited by the product CTP, via allosteric rather than competitive inhibition. Its function is as follows. Catalyzes the ATP-dependent amination of UTP to CTP with either L-glutamine or ammonia as the source of nitrogen. Regulates intracellular CTP levels through interactions with the four ribonucleotide triphosphates. This Corynebacterium glutamicum (strain R) protein is CTP synthase.